The chain runs to 224 residues: MGLKPPLKTRNPRNPAVAGVGLRPQPLLIDSIPCHRGVAGVDEVGRGCLFGPVFAGAVVLEAANASRLQQEGLTDSKRLSARRRGDLVPLIEHEAEAWGLGQSSTREIDRLGIRPATELAMLRALQRLPNRPELVLVDGNLPLRPWTGEQRSIVAGDQHSLAIAAASVIAKQCRDALMQRLSQRFPGYGLERHAGYGTALHRAALLDLGPSALHRRSFLRRFLG.

The RNase H type-2 domain maps to 36–224; that stretch reads RGVAGVDEVG…RRSFLRRFLG (189 aa). 3 residues coordinate a divalent metal cation: D42, E43, and D138.

This sequence belongs to the RNase HII family. It depends on Mn(2+) as a cofactor. Mg(2+) is required as a cofactor.

The protein resides in the cytoplasm. The enzyme catalyses Endonucleolytic cleavage to 5'-phosphomonoester.. Its function is as follows. Endonuclease that specifically degrades the RNA of RNA-DNA hybrids. This Parasynechococcus marenigrum (strain WH8102) protein is Ribonuclease HII.